The following is a 473-amino-acid chain: Calcium/calmodulin-dependent protein kinase type IV (473 aa).

Phosphoserine; by autocatalysis is present on residues Ser-12 and Ser-13. Positions 46–300 (FEVESELGRG…TFQALQHPWV (255 aa)) constitute a Protein kinase domain. ATP contacts are provided by residues 52–60 (LGRGATSIV) and Lys-75. O-linked (GlcNAc) threonine glycosylation occurs at Thr-57. The O-linked (GlcNAc) serine glycan is linked to Ser-58. Ser-137 carries an O-linked (GlcNAc) serine glycan. Catalysis depends on Asp-164, which acts as the Proton acceptor. Ser-189 is a glycosylation site (O-linked (GlcNAc) serine). A Phosphothreonine; by CaMKK1 and CaMKK2 modification is found at Thr-200. The autoinhibitory domain stretch occupies residues 305–321 (ANFVHMDTAQKKLQEFN). The interval 306 to 323 (NFVHMDTAQKKLQEFNAR) is PP2A-binding. The segment at 322–341 (ARRKLKAAVKAVVASSRLGS) is calmodulin-binding. A Phosphoserine; by autocatalysis modification is found at Ser-336. Residue Ser-341 is modified to Phosphoserine. Positions 341–350 (SASSSHGSIQ) are enriched in low complexity. Disordered stretches follow at residues 341–368 (SASS…GNED) and 445–473 (EEAA…LPEY). O-linked (GlcNAc) serine glycans are attached at residues Ser-344, Ser-345, and Ser-356. Ser-360 is modified (phosphoserine).

The protein belongs to the protein kinase superfamily. CAMK Ser/Thr protein kinase family. CaMK subfamily. In terms of assembly, monomer. Interacts with protein phosphatase 2A (PPP2CA/PPP2CB); the interaction is mutually exclusive with binding to Ca(2+)/calmodulin. Phosphorylated by CaMKK1 and CaMKK2 on Thr-200. Dephosphorylated by protein phosphatase 2A. Autophosphorylated on Ser-12 and Ser-13. Post-translationally, glycosylation at Ser-189 modulates the phosphorylation of CaMK4 at Thr-200 and negatively regulates its activity toward CREB1 in basal conditions and during early inomycin stimulation. Expressed in brain, thymus, CD4 T-cells, testis and epithelial ovarian cancer tissue.

Its subcellular location is the cytoplasm. The protein resides in the nucleus. The enzyme catalyses L-seryl-[protein] + ATP = O-phospho-L-seryl-[protein] + ADP + H(+). The catalysed reaction is L-threonyl-[protein] + ATP = O-phospho-L-threonyl-[protein] + ADP + H(+). Activated by Ca(2+)/calmodulin. Binding of calmodulin results in conformational change that relieves intrasteric autoinhibition and allows phosphorylation of Thr-200 within the activation loop by CaMKK1 or CaMKK2. Phosphorylation of Thr-200 results in a 10-20-fold increase in total activity to generate Ca(2+)/calmodulin-independent activity. Autophosphorylation of the N-terminus Ser-12 and Ser-13 is required for full activation. Inactivated by protein phosphatase 2A (PPP2CA/PPP2CB) which dephosphorylates Thr-200, thereby terminating autonomous activity and helping to maintain the enzyme in its autoinhibited state. In terms of biological role, calcium/calmodulin-dependent protein kinase that operates in the calcium-triggered CaMKK-CaMK4 signaling cascade and regulates, mainly by phosphorylation, the activity of several transcription activators, such as CREB1, MEF2D, JUN and RORA, which play pivotal roles in immune response, inflammation, and memory consolidation. In the thymus, regulates the CD4(+)/CD8(+) double positive thymocytes selection threshold during T-cell ontogeny. In CD4 memory T-cells, is required to link T-cell antigen receptor (TCR) signaling to the production of IL2, IFNG and IL4 (through the regulation of CREB and MEF2). Regulates the differentiation and survival phases of osteoclasts and dendritic cells (DCs). Mediates DCs survival by linking TLR4 and the regulation of temporal expression of BCL2. Phosphorylates the transcription activator CREB1 on 'Ser-133' in hippocampal neuron nuclei and contribute to memory consolidation and long term potentiation (LTP) in the hippocampus. Can activate the MAP kinases MAPK1/ERK2, MAPK8/JNK1 and MAPK14/p38 and stimulate transcription through the phosphorylation of ELK1 and ATF2. Can also phosphorylate in vitro CREBBP, PRM2, MEF2A and STMN1/OP18. The protein is Calcium/calmodulin-dependent protein kinase type IV (CAMK4) of Homo sapiens (Human).